A 691-amino-acid chain; its full sequence is Elongation factor G (691 aa).

In terms of domain architecture, tr-type G spans 8–282 (ERVRNIGIAA…AVVDYLPAPI (275 aa)). GTP contacts are provided by residues 17-24 (AHIDAGKT), 81-85 (DTPGH), and 135-138 (NKMD).

The protein belongs to the TRAFAC class translation factor GTPase superfamily. Classic translation factor GTPase family. EF-G/EF-2 subfamily.

It localises to the cytoplasm. Its function is as follows. Catalyzes the GTP-dependent ribosomal translocation step during translation elongation. During this step, the ribosome changes from the pre-translocational (PRE) to the post-translocational (POST) state as the newly formed A-site-bound peptidyl-tRNA and P-site-bound deacylated tRNA move to the P and E sites, respectively. Catalyzes the coordinated movement of the two tRNA molecules, the mRNA and conformational changes in the ribosome. The polypeptide is Elongation factor G (Synechococcus sp. (strain CC9902)).